A 216-amino-acid chain; its full sequence is Ribosomal RNA small subunit methyltransferase G (216 aa).

S-adenosyl-L-methionine-binding positions include G81, L86, 132–133, and R147; that span reads VE.

The protein belongs to the methyltransferase superfamily. RNA methyltransferase RsmG family.

The protein resides in the cytoplasm. It carries out the reaction guanosine(527) in 16S rRNA + S-adenosyl-L-methionine = N(7)-methylguanosine(527) in 16S rRNA + S-adenosyl-L-homocysteine. Specifically methylates the N7 position of guanine in position 527 of 16S rRNA. The chain is Ribosomal RNA small subunit methyltransferase G from Hydrogenovibrio crunogenus (strain DSM 25203 / XCL-2) (Thiomicrospira crunogena).